The chain runs to 526 residues: MEATLPVCKSVTSTPGLFMKRNSGIRNSQCSFMVGTKVNFPRQRTQATQANHCAKKNGGALGVTCRAEKILVANRGEIAVRVIRTAHELGIPCVAVYSTIDKDALHVKLADESVCIGEAPSNQSYLVIQNVLSAAISRGCTMLHPGYGFLAENAVFVEMCREHGINFIGPNPDSIRVMGDKSTARETMKKANVPTVPGSDGLLQSTEEAVKLASEIGYPVMIKATAGGGGRGMRLAKEPDEFVKLLQQAKSEAAAAFGNDGVYLEKYVQNPRHIEFQVLADKFGNVVHFGERDCSIQRRNQKLLEEAPSPALTPELRKAMGDAAVAAAASIGYIGVGTVEFLLDERGSFYFMEMNTRIQVEHPVTEMISSVDLIEEQIRVAMGEKIQYKQEDIVLRGHSIECRINAEDAFKGFRPGPGRITAYLPSGGPFVRMDSHVYPDYVVPPSYDSLLGKLIVWAPTREKAIERMKRALDDTIITGVPTTIDYHKLILDIEDFKNGNVDTAFIPKHEQELAAPQQIILANSAS.

Residues 1-71 (MEATLPVCKS…GVTCRAEKIL (71 aa)) constitute a chloroplast transit peptide. Residues lysine 181, 213-274 (ASEI…PRHI), lysine 223, 229-230 (GG), 265-268 (EKYV), and histidine 273 each bind ATP. Residues 185-382 (RETMKKANVP…LIEEQIRVAM (198 aa)) form the ATP-grasp domain. Lysine 302 contacts hydrogencarbonate. Residues glutamate 340 and glutamate 353 each coordinate ATP. Mg(2+) is bound by residues glutamate 340, glutamate 353, and asparagine 355. Positions 340, 353, and 355 each coordinate Mn(2+). Positions 357, 360, and 403 each coordinate hydrogencarbonate. Residue arginine 357 is part of the active site. Arginine 403 is a binding site for biotin.

Acetyl-CoA carboxylase is a heterohexamer composed of biotin carboxyl carrier protein, biotin carboxylase and two subunits each of ACCase subunit alpha and ACCase plastid-coded subunit beta (accD). Mg(2+) serves as cofactor. It depends on Mn(2+) as a cofactor.

It is found in the plastid. The protein resides in the chloroplast. The enzyme catalyses N(6)-biotinyl-L-lysyl-[protein] + hydrogencarbonate + ATP = N(6)-carboxybiotinyl-L-lysyl-[protein] + ADP + phosphate + H(+). It participates in lipid metabolism; malonyl-CoA biosynthesis; malonyl-CoA from acetyl-CoA: step 1/1. Functionally, this protein is a component of the acetyl coenzyme A carboxylase complex; first, biotin carboxylase catalyzes the carboxylation of the carrier protein and then the transcarboxylase transfers the carboxyl group to form malonyl-CoA. This chain is Biotin carboxylase 2, chloroplastic, found in Populus trichocarpa (Western balsam poplar).